Reading from the N-terminus, the 474-residue chain is UDP-N-acetylmuramate--L-alanine ligase (474 aa).

Gly116–Thr122 serves as a coordination point for ATP.

It belongs to the MurCDEF family.

The protein localises to the cytoplasm. The catalysed reaction is UDP-N-acetyl-alpha-D-muramate + L-alanine + ATP = UDP-N-acetyl-alpha-D-muramoyl-L-alanine + ADP + phosphate + H(+). It functions in the pathway cell wall biogenesis; peptidoglycan biosynthesis. In terms of biological role, cell wall formation. The polypeptide is UDP-N-acetylmuramate--L-alanine ligase (Hyphomonas neptunium (strain ATCC 15444)).